The chain runs to 156 residues: Large ribosomal subunit protein uL22 (156 aa).

Belongs to the universal ribosomal protein uL22 family. Part of the 50S ribosomal subunit.

In terms of biological role, this protein binds specifically to 23S rRNA. It makes multiple contacts with different domains of the 23S rRNA in the assembled 50S subunit and ribosome. The globular domain of the protein is located near the polypeptide exit tunnel on the outside of the subunit, while an extended beta-hairpin is found that lines the wall of the exit tunnel in the center of the 70S ribosome. The polypeptide is Large ribosomal subunit protein uL22 (Halobacterium salinarum (strain ATCC 700922 / JCM 11081 / NRC-1) (Halobacterium halobium)).